The primary structure comprises 1161 residues: Nuclear receptor-interacting protein 1 (1161 aa).

The interval 1-416 (MTHGEELGSD…FESSTPTTID (416 aa)) is interaction with ZNF366. The LXXLL motif 1 signature appears at 21-25 (LEGLL). A disordered region spans residues 34-68 (GTAINKKSAGHKEEDQNFNLSGSAFPSCQSNGPTV). Residues 50–68 (NFNLSGSAFPSCQSNGPTV) are compositionally biased toward polar residues. Residues 78–335 (MLHLKKARLL…LNGQARALPA (258 aa)) form a repression domain 1 region. Ser104 is modified (phosphoserine). N6-acetyllysine; alternate is present on Lys111. A Glycyl lysine isopeptide (Lys-Gly) (interchain with G-Cter in SUMO2); alternate cross-link involves residue Lys111. Residues 133-137 (LASLL) carry the LXXLL motif 2 motif. At Lys158 the chain carries N6-acetyllysine. A Glycyl lysine isopeptide (Lys-Gly) (interchain with G-Cter in SUMO2) cross-link involves residue Lys170. An LXXLL motif 3 motif is present at residues 185-189 (LKTLL). Glycyl lysine isopeptide (Lys-Gly) (interchain with G-Cter in SUMO2) cross-links involve residues Lys195 and Lys198. Thr207 bears the Phosphothreonine mark. Residue Ser218 is modified to Phosphoserine. The LXXLL motif 4 motif lies at 267–271 (LALLL). 2 positions are modified to N6-acetyllysine: Lys287 and Lys311. Ser358 carries the phosphoserine modification. Residue Lys374 forms a Glycyl lysine isopeptide (Lys-Gly) (interchain with G-Cter in SUMO2) linkage. A Phosphoserine modification is found at Ser380. An LXXLL motif 5 motif is present at residues 382–386 (LLHLL). The tract at residues 393–436 (TPMNGHSQNERASSFESSTPTTIDEYSDNNPSFTDDSSGDESSY) is disordered. The segment at 411-701 (TPTTIDEYSD…PAGPEPGLPG (291 aa)) is repression domain 2. The required for targeting to small nuclear foci stretch occupies residues 432 to 473 (DESSYSNCVPIDLSCKHRIEKPEAERPVSLENLTQSLLNTWD). The CTBP-binding; principal site signature appears at 441-447 (PIDLSCK). N6-acetyllysine is present on residues Lys447 and Lys482. A Phosphoserine modification is found at Ser488. Residues 501-505 (LLQLL) carry the LXXLL motif 6 motif. A Glycyl lysine isopeptide (Lys-Gly) (interchain with G-Cter in SUMO2) cross-link involves residue Lys509. Polar residues predominate over residues 517–552 (NASPQDIHSDGTKFSPQNYTRTSVIESPSTNRTTPV). The segment at 517–559 (NASPQDIHSDGTKFSPQNYTRTSVIESPSTNRTTPVSTPPLYT) is disordered. Ser519 is modified (phosphoserine). Lys529 is subject to N6-acetyllysine. Ser531, Ser543, and Ser565 each carry phosphoserine. Residues 566–570 (PINLS) carry the CTBP-binding motif. Disordered stretches follow at residues 604–623 (TKGK…AQNS), 639–702 (GLQS…LPGC), and 717–747 (LLGN…ERAA). Residue Lys607 is modified to N6-acetyllysine. Ser672 carries the post-translational modification Phosphoserine. The LXXLL motif 7 signature appears at 714–718 (LQLLL). A compositionally biased stretch (basic and acidic residues) spans 724 to 747 (GKNEKKEKTPARDEAPQEHSERAA). Positions 736–886 (DEAPQEHSER…TAVDTANHHS (151 aa)) are repression domain 3. An interaction with ZNF366 region spans residues 754 to 1161 (VKIKSEPCDD…NALTIKKESE (408 aa)). Residues Lys757 and Lys803 each participate in a glycyl lysine isopeptide (Lys-Gly) (interchain with G-Cter in SUMO2) cross-link. Ser808 is modified (phosphoserine). Residues 820–824 (LSRLL) carry the LXXLL motif 8 motif. The segment at 829-848 (ESYPADEQDKSHRNSELPTL) is disordered. Glycyl lysine isopeptide (Lys-Gly) (interchain with G-Cter in SUMO2) cross-links involve residues Lys851 and Lys902. Lys932 is subject to N6-acetyllysine; alternate. Residue Lys932 forms a Glycyl lysine isopeptide (Lys-Gly) (interchain with G-Cter in SUMO2); alternate linkage. Residues 937–941 (LKQLL) carry the LXXLL motif 9 motif. Positions 947-951 (VRDLS) match the CTBP-binding motif. Positions 950 to 962 (LSPHRSDSVPDTK) are enriched in basic and acidic residues. Residues 950–976 (LSPHRSDSVPDTKKKGHKNNAPGSKPE) are disordered. A Phosphoserine modification is found at Ser1003. The interval 1063–1076 (LTKTNPILYYMLQK) is ligand-dependent nuclear receptor binding. Residues Lys1108, Lys1118, and Lys1157 each participate in a glycyl lysine isopeptide (Lys-Gly) (interchain with G-Cter in SUMO2) cross-link. The repression domain 4 stretch occupies residues 1121 to 1161 (FFNLRSPYNSHMGNNASRPHSTNGEVYGLLGNALTIKKESE).

In terms of assembly, interacts with CTBP1, CTBP2, ERS1, HDAC1, HDAC2, HDAC5, HDAC6, NR2C2, NR3C1, NR3C2, YWHAH, JUN and FOS. Found in a complex with both NR3C1 and YWHAH. Interacts with NR2C1 (sumoylated form and via the ligand-binding domain); the interaction results in promoting the repressor activity of NR2C1. Interacts with RARA and RXRB homodimers and RARA/RXRB heterodimers in the presence of ligand. Interacts with HDAC1 and HDAC3 via its N-terminal domain. Interacts with ZNF366. Interacts with RORA. Post-translationally, acetylation abolishes interaction with CTBP1. Phosphorylation enhances interaction with YWHAH. Acetylation regulates its nuclear translocation and corepressive activity. In terms of tissue distribution, expressed in the embryonic placenta. In the adult, expression is strong in the testis and brain. Also expressed at a high level in the white adipose tissue. Expressed constantly but at a weaker level in the adult heart, lung, stomach and kidney. Expressed moderately in the skeletal muscle. Expressed at a low level in the adult spleen, liver and brown adipose tissue. Expressed in the ovary at a high level in granulosa cells and at a lower level in the thecal and interstitial compartments.

Its subcellular location is the nucleus. Its function is as follows. Modulates transcriptional repression by nuclear hormone receptors such as NR2C1, thyroid hormone receptor and retinoic acid receptor/RARA. Essential for cumulus expansion and follicle rupture during ovulation. Also controls the balance between fat accumulation and energy expenditure. Positive regulator of the circadian clock gene expression: stimulates transcription of BMAL1, CLOCK and CRY1 by acting as a coactivator for RORA and RORC. Involved in the regulation of ovarian function. Plays a role in renal development. The chain is Nuclear receptor-interacting protein 1 from Mus musculus (Mouse).